We begin with the raw amino-acid sequence, 58 residues long: Putative antitoxin VapB16 (58 aa).

Functionally, putative antitoxin component of a possible type II toxin-antitoxin (TA) system. The cognate toxin is VapC16. The chain is Putative antitoxin VapB16 (vapB16) from Mycobacterium tuberculosis (strain ATCC 25618 / H37Rv).